A 435-amino-acid polypeptide reads, in one-letter code: Citrate synthase (435 aa).

Residues histidine 311 and aspartate 370 contribute to the active site.

The protein belongs to the citrate synthase family.

The catalysed reaction is oxaloacetate + acetyl-CoA + H2O = citrate + CoA + H(+). Its pathway is carbohydrate metabolism; tricarboxylic acid cycle; isocitrate from oxaloacetate: step 1/2. The polypeptide is Citrate synthase (gltA) (Rickettsia slovaca (strain 13-B)).